Reading from the N-terminus, the 403-residue chain is Ribosomal RNA large subunit methyltransferase I (403 aa).

Positions 9–88 (YPRLVLSKGR…ESIDIAFFTR (80 aa)) constitute a PUA domain.

Belongs to the methyltransferase superfamily. RlmI family.

It is found in the cytoplasm. The enzyme catalyses cytidine(1962) in 23S rRNA + S-adenosyl-L-methionine = 5-methylcytidine(1962) in 23S rRNA + S-adenosyl-L-homocysteine + H(+). Specifically methylates the cytosine at position 1962 (m5C1962) of 23S rRNA. The sequence is that of Ribosomal RNA large subunit methyltransferase I from Salmonella schwarzengrund (strain CVM19633).